Reading from the N-terminus, the 245-residue chain is Triosephosphate isomerase (245 aa).

Position 9–11 (9–11 (NWK)) interacts with substrate. H92 acts as the Electrophile in catalysis. E164 functions as the Proton acceptor in the catalytic mechanism. Substrate contacts are provided by residues G170, S209, and 230 to 231 (GG).

This sequence belongs to the triosephosphate isomerase family. Homodimer.

The protein localises to the cytoplasm. It carries out the reaction D-glyceraldehyde 3-phosphate = dihydroxyacetone phosphate. Its pathway is carbohydrate biosynthesis; gluconeogenesis. The protein operates within carbohydrate degradation; glycolysis; D-glyceraldehyde 3-phosphate from glycerone phosphate: step 1/1. Functionally, involved in the gluconeogenesis. Catalyzes stereospecifically the conversion of dihydroxyacetone phosphate (DHAP) to D-glyceraldehyde-3-phosphate (G3P). This Cupriavidus pinatubonensis (strain JMP 134 / LMG 1197) (Cupriavidus necator (strain JMP 134)) protein is Triosephosphate isomerase.